A 372-amino-acid polypeptide reads, in one-letter code: Innexin-16 (372 aa).

4 helical membrane passes run 31-51 (VVTT…NYVG), 106-126 (VPFL…FWII), 181-201 (LVMK…LNSF), and 263-283 (IFIF…GDFV). N352 carries an N-linked (GlcNAc...) asparagine glycan.

The protein belongs to the pannexin family.

The protein localises to the cell membrane. Its subcellular location is the cell junction. It localises to the gap junction. Structural component of the gap junctions. Required for signals downstream of defecation clock. In Caenorhabditis elegans, this protein is Innexin-16 (inx-16).